Here is a 497-residue protein sequence, read N- to C-terminus: Glycerol kinase (497 aa).

An ADP-binding site is contributed by Thr11. ATP is bound by residues Thr11, Ser12, and Ser13. Sn-glycerol 3-phosphate is bound at residue Thr11. Position 15 (Arg15) interacts with ADP. Arg81, Glu82, Tyr133, and Asp242 together coordinate sn-glycerol 3-phosphate. Positions 81, 82, 133, 242, and 243 each coordinate glycerol. ADP is bound by residues Thr264 and Gly307. ATP is bound by residues Thr264, Gly307, Gln311, and Gly412. Residues Gly412 and Asn416 each contribute to the ADP site.

This sequence belongs to the FGGY kinase family.

The catalysed reaction is glycerol + ATP = sn-glycerol 3-phosphate + ADP + H(+). Its pathway is polyol metabolism; glycerol degradation via glycerol kinase pathway; sn-glycerol 3-phosphate from glycerol: step 1/1. With respect to regulation, inhibited by fructose 1,6-bisphosphate (FBP). Its function is as follows. Key enzyme in the regulation of glycerol uptake and metabolism. Catalyzes the phosphorylation of glycerol to yield sn-glycerol 3-phosphate. This is Glycerol kinase from Polaromonas sp. (strain JS666 / ATCC BAA-500).